Reading from the N-terminus, the 526-residue chain is Light-independent protochlorophyllide reductase subunit B (526 aa).

A [4Fe-4S] cluster-binding site is contributed by Asp36. Catalysis depends on Asp284, which acts as the Proton donor. A substrate-binding site is contributed by 419–420 (GL).

This sequence belongs to the ChlB/BchB/BchZ family. In terms of assembly, protochlorophyllide reductase is composed of three subunits; BchL, BchN and BchB. Forms a heterotetramer of two BchB and two BchN subunits. [4Fe-4S] cluster serves as cofactor.

It carries out the reaction chlorophyllide a + oxidized 2[4Fe-4S]-[ferredoxin] + 2 ADP + 2 phosphate = protochlorophyllide a + reduced 2[4Fe-4S]-[ferredoxin] + 2 ATP + 2 H2O. Its pathway is porphyrin-containing compound metabolism; bacteriochlorophyll biosynthesis (light-independent). Its function is as follows. Component of the dark-operative protochlorophyllide reductase (DPOR) that uses Mg-ATP and reduced ferredoxin to reduce ring D of protochlorophyllide (Pchlide) to form chlorophyllide a (Chlide). This reaction is light-independent. The NB-protein (BchN-BchB) is the catalytic component of the complex. The protein is Light-independent protochlorophyllide reductase subunit B of Halorhodospira halophila (strain DSM 244 / SL1) (Ectothiorhodospira halophila (strain DSM 244 / SL1)).